Reading from the N-terminus, the 269-residue chain is Formamidopyrimidine-DNA glycosylase (269 aa).

Residue Pro-2 is the Schiff-base intermediate with DNA of the active site. The active-site Proton donor is the Glu-3. The Proton donor; for beta-elimination activity role is filled by Lys-57. DNA is bound by residues His-90, Arg-109, and Lys-150. The FPG-type zinc-finger motif lies at 235–269 (QVYGKGGLPCPKCGTELAEVKIGQRATVYCSQCQQ). Arg-259 (proton donor; for delta-elimination activity) is an active-site residue.

It belongs to the FPG family. As to quaternary structure, monomer. It depends on Zn(2+) as a cofactor.

It carries out the reaction Hydrolysis of DNA containing ring-opened 7-methylguanine residues, releasing 2,6-diamino-4-hydroxy-5-(N-methyl)formamidopyrimidine.. It catalyses the reaction 2'-deoxyribonucleotide-(2'-deoxyribose 5'-phosphate)-2'-deoxyribonucleotide-DNA = a 3'-end 2'-deoxyribonucleotide-(2,3-dehydro-2,3-deoxyribose 5'-phosphate)-DNA + a 5'-end 5'-phospho-2'-deoxyribonucleoside-DNA + H(+). Involved in base excision repair of DNA damaged by oxidation or by mutagenic agents. Acts as a DNA glycosylase that recognizes and removes damaged bases. Has a preference for oxidized purines, such as 7,8-dihydro-8-oxoguanine (8-oxoG). Has AP (apurinic/apyrimidinic) lyase activity and introduces nicks in the DNA strand. Cleaves the DNA backbone by beta-delta elimination to generate a single-strand break at the site of the removed base with both 3'- and 5'-phosphates. This Photobacterium damsela subsp. piscicida (Pasteurella piscicida) protein is Formamidopyrimidine-DNA glycosylase.